A 500-amino-acid polypeptide reads, in one-letter code: Bifunctional protein GlmU (500 aa).

Positions 1–242 (MPVQTAVVVL…SAKVAGANDR (242 aa)) are pyrophosphorylase. UDP-N-acetyl-alpha-D-glucosamine is bound by residues 10 to 13 (LAAG), Lys24, Gln81, and 86 to 87 (GT). Asp112 serves as a coordination point for Mg(2+). UDP-N-acetyl-alpha-D-glucosamine-binding residues include Gly151, Glu167, Asn182, and Asn240. Mg(2+) is bound at residue Asn240. The linker stretch occupies residues 243 to 263 (VQLSRLAAELNRRTVENWMRA). The N-acetyltransferase stretch occupies residues 264 to 500 (GVTVVDPSTT…KQDLKDGIEQ (237 aa)). 2 residues coordinate UDP-N-acetyl-alpha-D-glucosamine: Arg345 and Lys363. The active-site Proton acceptor is the His375. UDP-N-acetyl-alpha-D-glucosamine is bound by residues Tyr378 and Asn389. Acetyl-CoA-binding positions include Ala392, 398–399 (NY), Ser417, and Ala435. The interval 472–500 (AEAAAAAGLHHSSDLHETEKQDLKDGIEQ) is disordered. The span at 482-500 (HSSDLHETEKQDLKDGIEQ) shows a compositional bias: basic and acidic residues.

It in the N-terminal section; belongs to the N-acetylglucosamine-1-phosphate uridyltransferase family. The protein in the C-terminal section; belongs to the transferase hexapeptide repeat family. In terms of assembly, homotrimer. It depends on Mg(2+) as a cofactor.

It localises to the cytoplasm. It carries out the reaction alpha-D-glucosamine 1-phosphate + acetyl-CoA = N-acetyl-alpha-D-glucosamine 1-phosphate + CoA + H(+). The enzyme catalyses N-acetyl-alpha-D-glucosamine 1-phosphate + UTP + H(+) = UDP-N-acetyl-alpha-D-glucosamine + diphosphate. Its pathway is nucleotide-sugar biosynthesis; UDP-N-acetyl-alpha-D-glucosamine biosynthesis; N-acetyl-alpha-D-glucosamine 1-phosphate from alpha-D-glucosamine 6-phosphate (route II): step 2/2. It participates in nucleotide-sugar biosynthesis; UDP-N-acetyl-alpha-D-glucosamine biosynthesis; UDP-N-acetyl-alpha-D-glucosamine from N-acetyl-alpha-D-glucosamine 1-phosphate: step 1/1. The protein operates within bacterial outer membrane biogenesis; LPS lipid A biosynthesis. In terms of biological role, catalyzes the last two sequential reactions in the de novo biosynthetic pathway for UDP-N-acetylglucosamine (UDP-GlcNAc). The C-terminal domain catalyzes the transfer of acetyl group from acetyl coenzyme A to glucosamine-1-phosphate (GlcN-1-P) to produce N-acetylglucosamine-1-phosphate (GlcNAc-1-P), which is converted into UDP-GlcNAc by the transfer of uridine 5-monophosphate (from uridine 5-triphosphate), a reaction catalyzed by the N-terminal domain. This chain is Bifunctional protein GlmU, found in Rhodococcus jostii (strain RHA1).